Here is a 517-residue protein sequence, read N- to C-terminus: 3-hydroxyphenylacetate 6-hydroxylase (517 aa).

Cys-449 contacts heme.

This sequence belongs to the cytochrome P450 family.

The catalysed reaction is 3-hydroxyphenylacetate + NADH + O2 + H(+) = homogentisate + NAD(+) + H2O. It catalyses the reaction 3-hydroxyphenylacetate + NADPH + O2 + H(+) = homogentisate + NADP(+) + H2O. It carries out the reaction 3,4-dihydroxyphenylacetate + NADH + O2 + H(+) = 2,4,5-trihydroxyphenylacetate + NAD(+) + H2O. The enzyme catalyses 3,4-dihydroxyphenylacetate + NADPH + O2 + H(+) = 2,4,5-trihydroxyphenylacetate + NADP(+) + H2O. Its pathway is aromatic compound metabolism; phenylacetate degradation. Its function is as follows. Catalyzes the hydroxylation of 3-hydroxyphenylacetate and 3,4-dihydroxyphenylacetate to 2,5-dihydroxyphenylacetate (homogentisate) and 2,4,5-trihydroxyphenylacetate, respectively. Both of these compounds are used as substrate by homogentisate dioxygenase in the homogentisate pathway. The homogentisate pathway is used to catabolize phenylacetate and use it as a carbon source. Can also catalyze the hydroxylation of phenylacetate to 2-hydroxyphenylacetate at low efficiency to compensate for loss of phacA. This Emericella nidulans (Aspergillus nidulans) protein is 3-hydroxyphenylacetate 6-hydroxylase (phacB).